The following is a 168-amino-acid chain: Ribosome maturation factor RimP (168 aa).

Belongs to the RimP family.

It localises to the cytoplasm. Required for maturation of 30S ribosomal subunits. The chain is Ribosome maturation factor RimP from Rickettsia bellii (strain OSU 85-389).